The following is a 418-amino-acid chain: Tyrosine--tRNA ligase (418 aa).

Residue Tyr-38 coordinates L-tyrosine. The 'HIGH' region signature appears at 43 to 52; it reads CTARSLHIGS. Residues Tyr-175 and Gln-179 each contribute to the L-tyrosine site. The 'KMSKS' region motif lies at 235–239; it reads KMGKT. Lys-238 serves as a coordination point for ATP. Residues 348-413 form the S4 RNA-binding domain; the sequence is LSVVKLLQVS…CGKKRHLKVV (66 aa).

Belongs to the class-I aminoacyl-tRNA synthetase family. TyrS type 1 subfamily. In terms of assembly, homodimer.

The protein resides in the cytoplasm. The enzyme catalyses tRNA(Tyr) + L-tyrosine + ATP = L-tyrosyl-tRNA(Tyr) + AMP + diphosphate + H(+). Catalyzes the attachment of tyrosine to tRNA(Tyr) in a two-step reaction: tyrosine is first activated by ATP to form Tyr-AMP and then transferred to the acceptor end of tRNA(Tyr). This chain is Tyrosine--tRNA ligase, found in Ehrlichia ruminantium (strain Welgevonden).